Here is a 332-residue protein sequence, read N- to C-terminus: Melanocortin receptor 4 (332 aa).

At 1–43 (MNSTQPLGMHTSLHSWNRSAHGMPTNVSESLAKGYSDGGCYEQ) the chain is on the extracellular side. N2, N17, and N26 each carry an N-linked (GlcNAc...) asparagine glycan. 2 disulfides stabilise this stretch: C40–C279 and C271–C277. Residues 44–69 (LFVSPEVFVTLGVISLLENILVIVAI) form a helical membrane-spanning segment. Residues 70 to 81 (AKNKNLHSPMYF) are Cytoplasmic-facing. The helical transmembrane segment at 82-106 (FICSLAVADMLVSVSNGSETIVITL) threads the bilayer. Ca(2+) is bound by residues E100, D122, and D126. The Extracellular segment spans residues 107–123 (LNSTDTDAQSFTVDIDN). The chain crosses the membrane as a helical span at residues 124–145 (VIDSVICSSLLASICSLLSIAV). At 146 to 165 (DRYFTIFYALQYHNIMTVKR) the chain is on the cytoplasmic side. Residues 166-186 (VAITISAIWAACTVSGVLFII) traverse the membrane as a helical segment. Residues 187–191 (YSDSS) lie on the Extracellular side of the membrane. The chain crosses the membrane as a helical span at residues 192-215 (AVIICLITVFFTMLALMASLYVHM). Over 216-248 (FLMARLHIKRIAVLPGSGTIRQGANMKGAITLT) the chain is Cytoplasmic. A helical membrane pass occupies residues 249–271 (ILIGVFVVCWAPFFLHLIFYISC). Topologically, residues 272-280 (PQNPYCVCF) are extracellular. A helical transmembrane segment spans residues 281-304 (MSHFNLYLILIMCNSIIDPLIYAL). The Cytoplasmic segment spans residues 305 to 332 (RSQELRKTFKEIICCSPLGGLCDLSSRY). A lipid anchor (S-palmitoyl cysteine) is attached at C318.

This sequence belongs to the G-protein coupled receptor 1 family. Homodimer; disulfide-linked, also forms higher order oligomers. Interacts with GNAS. Interacts with ATRNL1. Interacts with MGRN1; this interaction competes with GNAS-binding and thus inhibits agonist-induced cAMP production. Interacts with MRAP and MRAP2; these associated factors increase ligand-sensitivity and generation of cAMP.

Its subcellular location is the cell membrane. Functionally, hormone receptor that acts as a key component of the leptin-melanocortin pathway at the intersection of homeostatic maintenance of energetic state. Plays a role in regulating food intake: activation by a stimulating hormone such as anorexigenic alpha-melanocyte stimulating hormone (alpha-MSH) inhibits appetite, whereas binding to a natural antagonist like Agouti-related protein/AGRP promotes appetite. G-protein-coupled receptor that activates conventional Galphas signaling leading to induction of anorexogenic signaling in the hypothalamus to result in negative energy balance. Regulates the firing activity of neurons from the hypothalamus by alpha-MSH and AGRP independently of Galphas signaling by ligand-induced coupling of closure of inwardly rectifying potassium channel KCNJ13. In intestinal epithelial cells, plays a role in the inhibition of hepatic glucose production via nesfatin-1/NUCB2 leading to increased cyclic adenosine monophosphate (cAMP) levels and glucagon-like peptide 1 (GLP-1) secretion in the intestinal epithelium. The sequence is that of Melanocortin receptor 4 (MC4R) from Bos taurus (Bovine).